The primary structure comprises 611 residues: DNA mismatch repair protein MutL (611 aa).

This sequence belongs to the DNA mismatch repair MutL/HexB family.

Functionally, this protein is involved in the repair of mismatches in DNA. It is required for dam-dependent methyl-directed DNA mismatch repair. May act as a 'molecular matchmaker', a protein that promotes the formation of a stable complex between two or more DNA-binding proteins in an ATP-dependent manner without itself being part of a final effector complex. This chain is DNA mismatch repair protein MutL, found in Rickettsia bellii (strain RML369-C).